The primary structure comprises 640 residues: MPEQDLASGFLLRFQNARPVCLSVGSFVSFRTVQPRKMRDRGWRCVWHRMAGVGALFGIFGVLCTVEAGATVAAPQVETGPLLSVRAPRSPLHLRDVDAPEVTHASSEGSPQFESSLSQQRLRRPADRGEAHNGEEPRKDAATQTVRGYGGQSTEPPPASIVPVSSEAPQDGAEQRQASSAAESLAGLDPDAGDTGLRSQEMDEEGSGAAQDMERAHAAQPTVSTWDDAHLVQVSTSHPDMFPVDGSFSKKQEGRRERRLAVRGDDSFARGHNRDRDASNGRSILRRAPGWAKIAALATGLLVSAFGYSSYKHGGPRVALRIHKLHLKRKLPISWRRYLNNLPVLDERLFPEFEDILPWLRRGARLVKRVPHVSEALADFIGLDEETRRTGIVIKVKSSTDAEARRLVYEVNAHANMVPDNPFFLPIIGAYQGASKRAVYMILPRARADVADYVRARPYDVDVRLAAAEMVYSNYILHTHGFLHRDIKAHNYFVTFDGHVVLADFEGVGVLQQRTPVVGTRGYFAPELSRATDHTEKSDVFALGQTLKRLVKYMRPTVRVPHLRELWALTKRMTAKDPEERPTLKQVMEDPYFDGIDFERLEAKDQGVPFRGDFSIDDPDAGGKMYIPPSKEQDHEQENE.

The N-terminal stretch at 1–70 is a signal peptide; it reads MPEQDLASGF…GVLCTVEAGA (70 aa). 2 disordered regions span residues 100–222 and 237–280; these read PEVT…AQPT and SHPD…DASN. A compositionally biased stretch (polar residues) spans 104-120; that stretch reads HASSEGSPQFESSLSQQ. Residues 124-141 show a composition bias toward basic and acidic residues; sequence RPADRGEAHNGEEPRKDA. The segment covering 175–186 has biased composition (low complexity); that stretch reads QRQASSAAESLA. A compositionally biased stretch (basic and acidic residues) spans 248 to 279; the sequence is FSKKQEGRRERRLAVRGDDSFARGHNRDRDAS. The 303-residue stretch at 291–593 folds into the Protein kinase domain; sequence WAKIAALATG…LKQVMEDPYF (303 aa). An ATP-binding site is contributed by Lys-395. The active-site Proton acceptor is the Asp-486. Residues 609–640 form a disordered region; that stretch reads PFRGDFSIDDPDAGGKMYIPPSKEQDHEQENE. The segment covering 631 to 640 has biased composition (basic and acidic residues); it reads KEQDHEQENE.

Belongs to the protein kinase superfamily. STE Ser/Thr protein kinase family. WNG subfamily. It depends on Mg(2+) as a cofactor.

The protein resides in the cytoplasmic granule. The protein localises to the secreted. It is found in the parasitophorous vacuole lumen. The catalysed reaction is L-seryl-[protein] + ATP = O-phospho-L-seryl-[protein] + ADP + H(+). It catalyses the reaction L-threonyl-[protein] + ATP = O-phospho-L-threonyl-[protein] + ADP + H(+). In terms of biological role, serine/threonine-protein kinase which, at the tachyzoite stage, phosphorylates several parasitophorous vacuole (PV)-resident proteins such as GRA2, GRA6 and GRA7. By phosphorylating GRA2 and GRA6, regulates the formation of a functional intravacuolar network (IVN); IVN is composed of membranous tubules that bud from the PV membrane into the vacuolar lumen. Plays a role in the establishement of chronic infection in the host by controlling cyst formation in the host tissues. The polypeptide is Serine/threonine-protein kinase WNG1 (Toxoplasma gondii).